The primary structure comprises 233 residues: ATP-dependent Clp protease proteolytic subunit 1 (233 aa).

The active-site Nucleophile is Ser-136. His-161 is a catalytic residue.

The protein belongs to the peptidase S14 family. As to quaternary structure, fourteen ClpP subunits assemble into 2 heptameric rings which stack back to back to give a disk-like structure with a central cavity, resembling the structure of eukaryotic proteasomes.

It localises to the cytoplasm. The enzyme catalyses Hydrolysis of proteins to small peptides in the presence of ATP and magnesium. alpha-casein is the usual test substrate. In the absence of ATP, only oligopeptides shorter than five residues are hydrolyzed (such as succinyl-Leu-Tyr-|-NHMec, and Leu-Tyr-Leu-|-Tyr-Trp, in which cleavage of the -Tyr-|-Leu- and -Tyr-|-Trp bonds also occurs).. Functionally, cleaves peptides in various proteins in a process that requires ATP hydrolysis. Has a chymotrypsin-like activity. Plays a major role in the degradation of misfolded proteins. The protein is ATP-dependent Clp protease proteolytic subunit 1 of Bifidobacterium longum (strain NCC 2705).